Here is a 187-residue protein sequence, read N- to C-terminus: Ribosome hibernation promotion factor (187 aa).

The protein belongs to the HPF/YfiA ribosome-associated protein family. Long HPF subfamily. Interacts with 100S ribosomes.

The protein localises to the cytoplasm. Its function is as follows. Involved in 100S ribosome formation from 70S ribosomes; 100S ribosomes are probably translationally inactive. Ribosome hibernation may be used by the cell to decrease overall energy consumption under nutrient-limiting conditions. Unlike E.coli, 100S ribosomes are present from mid-exponential growth, peak during the transition from log to stationary phase and then decrease. This is Ribosome hibernation promotion factor from Listeria monocytogenes serotype 1/2a (strain 10403S).